Reading from the N-terminus, the 429-residue chain is Probable M18 family aminopeptidase 2 (429 aa).

Residues H82, H156, and H401 each contribute to the Zn(2+) site.

The protein belongs to the peptidase M18 family. Zn(2+) serves as cofactor.

This Ectopseudomonas mendocina (strain ymp) (Pseudomonas mendocina) protein is Probable M18 family aminopeptidase 2.